Reading from the N-terminus, the 522-residue chain is F-box/LRR-repeat protein 16 (522 aa).

The F-box domain occupies Tyr-38–Leu-84. 10 LRR repeats span residues Ser-115–Gly-140, Cys-141–Ser-166, Phe-169–Arg-191, Arg-266–Lys-290, Thr-291–Gly-316, Val-319–Gly-344, Thr-348–Gly-369, Ser-370–Ile-393, Gly-395–Lys-420, and Cys-421–Glu-447.

The chain is F-box/LRR-repeat protein 16 (FBL16) from Arabidopsis thaliana (Mouse-ear cress).